Consider the following 421-residue polypeptide: Gamma-glutamyl phosphate reductase (421 aa).

The protein belongs to the gamma-glutamyl phosphate reductase family.

It is found in the cytoplasm. The enzyme catalyses L-glutamate 5-semialdehyde + phosphate + NADP(+) = L-glutamyl 5-phosphate + NADPH + H(+). The protein operates within amino-acid biosynthesis; L-proline biosynthesis; L-glutamate 5-semialdehyde from L-glutamate: step 2/2. Its function is as follows. Catalyzes the NADPH-dependent reduction of L-glutamate 5-phosphate into L-glutamate 5-semialdehyde and phosphate. The product spontaneously undergoes cyclization to form 1-pyrroline-5-carboxylate. The sequence is that of Gamma-glutamyl phosphate reductase from Stutzerimonas stutzeri (strain A1501) (Pseudomonas stutzeri).